We begin with the raw amino-acid sequence, 558 residues long: Coiled-coil domain-containing protein 63 (558 aa).

The interval 1-26 (MPTKKHRRKDPESPQEPSEKTKEQLV) is disordered. Residues 9-26 (KDPESPQEPSEKTKEQLV) show a composition bias toward basic and acidic residues. Coiled-coil stretches lie at residues 48-289 (NFRS…KAKK) and 339-416 (VTEL…VENL). A disordered region spans residues 531–558 (HYATRESRNRDSMPEKGDELKSKKKVTV). The segment covering 533 to 551 (ATRESRNRDSMPEKGDELK) has biased composition (basic and acidic residues).

Plays a role in spermiogenesis. Involved in the elongation of flagella and the formation of sperm heads. The polypeptide is Coiled-coil domain-containing protein 63 (Bos taurus (Bovine)).